The following is a 115-amino-acid chain: Large ribosomal subunit protein eL30 (115 aa).

Residues S10 and S16 each carry the phosphoserine modification. Residue K26 is modified to N6-acetyllysine; alternate. A Glycyl lysine isopeptide (Lys-Gly) (interchain with G-Cter in SUMO2); alternate cross-link involves residue K26.

This sequence belongs to the eukaryotic ribosomal protein eL30 family. As to quaternary structure, component of the large ribosomal subunit.

It is found in the cytoplasm. Its function is as follows. Component of the large ribosomal subunit. The ribosome is a large ribonucleoprotein complex responsible for the synthesis of proteins in the cell. The sequence is that of Large ribosomal subunit protein eL30 (RPL30) from Oryctolagus cuniculus (Rabbit).